The chain runs to 240 residues: MNAEKSPVNHNVDHEEIAKFEAVASRWWDLEGEFKPLHRINPLRLGYIAERAGGLFGKKVLDVGCGGGILAESMAREGATVTGLDMGFEPLQVAKLHALESGIQVDYVQETVEEHAAKHAGQYDVVTCMEMLEHVPDPQSVVRACAQLVKPGGDVFFSTLNRNGKSWLMAVVGAEYILRMVPKGTHDVKKFIKPAELLGWVDQTSLKERHMTGLHYNPITNSFKLGPGVDVNYMLHTQNK.

Residues arginine 44, glycine 64, aspartate 85, and methionine 129 each contribute to the S-adenosyl-L-methionine site.

The protein belongs to the methyltransferase superfamily. UbiG/COQ3 family.

It catalyses the reaction a 3-demethylubiquinol + S-adenosyl-L-methionine = a ubiquinol + S-adenosyl-L-homocysteine + H(+). It carries out the reaction a 3-(all-trans-polyprenyl)benzene-1,2-diol + S-adenosyl-L-methionine = a 2-methoxy-6-(all-trans-polyprenyl)phenol + S-adenosyl-L-homocysteine + H(+). The protein operates within cofactor biosynthesis; ubiquinone biosynthesis. Functionally, O-methyltransferase that catalyzes the 2 O-methylation steps in the ubiquinone biosynthetic pathway. The polypeptide is Ubiquinone biosynthesis O-methyltransferase (Escherichia coli (strain UTI89 / UPEC)).